A 30-amino-acid polypeptide reads, in one-letter code: Brevinin-2Rg (30 aa).

Cysteine 24 and cysteine 30 form a disulfide bridge.

Expressed by the skin glands.

It is found in the secreted. Functionally, antimicrobial peptide. The polypeptide is Brevinin-2Rg (Pelophylax ridibundus (Marsh frog)).